We begin with the raw amino-acid sequence, 211 residues long: Ras-related protein rab-11.1 (211 aa).

18–26 (GDSGVGKSN) serves as a coordination point for GTP. Positions 40-48 (SKSTIGVEF) match the Effector region motif. Residues 66 to 70 (DTAGQ), 124 to 127 (NKSD), and 154 to 156 (SAL) contribute to the GTP site. Residues 187 to 211 (GYGGGSGTIIPSPASDPPKKQCCIP) are disordered. 2 S-geranylgeranyl cysteine lipidation sites follow: Cys208 and Cys209.

Belongs to the small GTPase superfamily. Rab family. In terms of assembly, interacts with rei-1 and rei-2. The GDP-form preferentially binds to rei-1 and rei-2. Expressed weakly in sperm, but more predominantly in oocytes. Expressed in the intestine.

The protein localises to the cytoplasmic vesicle. Its subcellular location is the secretory vesicle. It localises to the endosome. It is found in the cytoplasm. The protein resides in the cytoskeleton. The protein localises to the spindle. Its subcellular location is the microtubule organizing center. It localises to the spindle pole body. It is found in the centrosome. The protein resides in the apical cell membrane. The protein localises to the cytosol. Its subcellular location is the recycling endosome membrane. It localises to the golgi apparatus membrane. It is found in the cytoplasmic granule. Functionally, the small GTPases Rab are key regulators of intracellular membrane trafficking, from the formation of transport vesicles to their fusion with membranes. Rabs cycle between an inactive GDP-bound form and an active GTP-bound form that is able to recruit to membranes different set of downstream effectors directly responsible for vesicle formation, movement, tethering and fusion. Involved in regulating the meiotic maturation of oocytes. Plays a role in egg shell formation, regulating exocytosis of chondroitin proteoglycans following fertilization. Controls cortical granule localization and targets them to the plasma membrane for exocytosis. Acts as a major regulator of membrane delivery during cytokinesis. Regulates the cytoskeleton by facilitating astral microtubule elongation and organization during metaphase to ensure proper spindle alignment and polarity in the first embryonic cell division. Maintains normal endoplasmic reticulum morphology during metaphase. Involved in vesicle formation and plasma membrane repair following exposure to pore forming toxins. Regulates endocytic recycling. May play a role in yolk receptor endocytosis in growing oocytes. Plays a role in the shedding of pathogen spores from intestinal cells via its involvement in spore fusion and endocytic trafficking. The polypeptide is Ras-related protein rab-11.1 (Caenorhabditis elegans).